We begin with the raw amino-acid sequence, 165 residues long: Polcalcin Cup a 4 (165 aa).

4 consecutive EF-hand domains span residues 22–57, 58–86, 91–126, and 127–162; these read QSVH…MGSE, VDEA…FVDL, ATVK…VGEP, and CTIE…EMTD. 19 residues coordinate Ca(2+): D35, N37, D39, K41, E46, D71, D73, D75, Y77, E82, D104, D106, N108, T110, E115, D140, N142, D144, and E151.

May exist as monomer and dimer. In terms of tissue distribution, expressed in mature pollen grains.

In Hesperocyparis arizonica (Arizona cypress), this protein is Polcalcin Cup a 4.